The primary structure comprises 434 residues: Zinc finger protein kipf (434 aa).

A ZAD domain is found at 7 to 88 (NVCRTCMDET…EQSYQHFFRV (82 aa)). Cys-9, Cys-12, Cys-61, and Cys-64 together coordinate Zn(2+). The interval 117–173 (QLKSDRQQDTQQMTKTQKPDDDLSQKQTLQAKLQEGNIDGPPESFTLHPRKRTCRTE) is disordered. The segment at 197 to 219 (YNCPHCSKRFCSQTQLRTHITDL) adopts a C2H2-type 1; degenerate zinc-finger fold. 3 consecutive C2H2-type zinc fingers follow at residues 221 to 243 (NRCP…LRNH), 249 to 271 (HKCF…LRTH), and 277 to 299 (LSCS…RREH). Positions 295–328 (HRREHKQRPGSSKSESTKDPDSDDSDQAQDLKPK) are disordered. Residues Ser-316 and Ser-319 each carry the phosphoserine modification. C2H2-type zinc fingers lie at residues 348–370 (PICD…MLTH), 377–399 (KKCT…ERGH), and 404–427 (FRCE…KRIH).

As to quaternary structure, homodimer; mediated by the ZAD domain. Interacts (via C2H2 type zinc finger 4) with rhi/rhino (via Chromo domain). Dimerization is required for association with DNA and interaction with rhi/rhino. As to expression, primarily expressed in ovaries and absent from testes. In ovaries very low levels in germline stem cells and cystoblasts but abundant in developing cysts and polyploid nurse cells.

The protein resides in the nucleus. The protein localises to the chromosome. In terms of biological role, DNA-binding zinc finger protein that recruits chromo domain protein rhino/rhi to specific chromatin regions enriched in H3K9me2/3 histone methylation, mediating piRNA (piwi-interacting RNA) biogenesis. May bind to GC rich DNA sequences including a 5'-GRGGN-3' sequence motif. Nucleates rhi/rhino accumulation and stabilizes its expansion. Involved in piRNA transposon repression, particularly in the female ovary during oogenesis. The polypeptide is Zinc finger protein kipf (Drosophila melanogaster (Fruit fly)).